The following is a 433-amino-acid chain: tRNA (guanine(10)-N(2))-methyltransferase (433 aa).

Belongs to the class I-like SAM-binding methyltransferase superfamily. TRM11 methyltransferase family. As to quaternary structure, interacts with TRM112.

Its subcellular location is the cytoplasm. The enzyme catalyses guanosine(10) in tRNA + S-adenosyl-L-methionine = N(2)-methylguanosine(10) in tRNA + S-adenosyl-L-homocysteine + H(+). Functionally, catalytic subunit of an S-adenosyl-L-methionine-dependent tRNA methyltransferase complex that mediates the methylation of the guanosine nucleotide at position 10 (m2G10) in tRNAs. The sequence is that of tRNA (guanine(10)-N(2))-methyltransferase (TRM11) from Saccharomyces cerevisiae (strain ATCC 204508 / S288c) (Baker's yeast).